Consider the following 72-residue polypeptide: MLSMSKAVKARAHTWYTIDMEKGVFRFNKRLCPRCGSVMAYHKEPVPRWHCGKCGYTIFESQAPRQRPSRGR.

The Zn(2+) site is built by Cys-32, Cys-35, Cys-51, and Cys-54. The C4-type zinc finger occupies 32–54; sequence CPRCGSVMAYHKEPVPRWHCGKC.

It belongs to the eukaryotic ribosomal protein eS31 family. Part of the 30S ribosomal subunit. Zn(2+) is required as a cofactor.

The protein is Small ribosomal subunit protein eS31 of Caldivirga maquilingensis (strain ATCC 700844 / DSM 13496 / JCM 10307 / IC-167).